Here is a 408-residue protein sequence, read N- to C-terminus: Aurora kinase A-B (408 aa).

The segment covering 1–10 has biased composition (basic and acidic residues); the sequence is MERAVKENHK. The tract at residues 1–128 is disordered; the sequence is MERAVKENHK…QGKTLAVPKE (128 aa). Over residues 85-110 the composition is skewed to polar residues; sequence GHQTSKPQGPNENRNPQQTSHSSTPN. Residues 140-390 form the Protein kinase domain; sequence FEIGRPLGKG…LKGVLEHPWI (251 aa). ATP contacts are provided by residues Lys-150, Lys-169, and 217 to 220; that span reads LDYA. The active-site Proton acceptor is the Asp-263. Asp-281 lines the ATP pocket. The tract at residues 287–300 is activation segment; it reads HAPSSRRTTLCGTL.

The protein belongs to the protein kinase superfamily. Ser/Thr protein kinase family. Aurora subfamily. Interacts with kif2c and kif11. Phosphorylated. Autophosphorylated on a serine residue.

It localises to the cytoplasm. The protein resides in the cytoskeleton. The protein localises to the spindle pole. Its subcellular location is the microtubule organizing center. It is found in the centrosome. The catalysed reaction is L-seryl-[protein] + ATP = O-phospho-L-seryl-[protein] + ADP + H(+). It carries out the reaction L-threonyl-[protein] + ATP = O-phospho-L-threonyl-[protein] + ADP + H(+). Mitotic serine/threonine kinases that contributes to the regulation of cell cycle progression. Associates with the centrosome and the spindle microtubules during mitosis and plays a critical role in various mitotic events including the establishment of mitotic spindle, centrosome duplication, centrosome separation as well as maturation, chromosomal alignment, spindle assembly checkpoint, and cytokinesis. Phosphorylates numerous target proteins. Important for microtubule formation and/or stabilization. In Xenopus laevis (African clawed frog), this protein is Aurora kinase A-B (aurka-b).